The sequence spans 561 residues: Ankyrin repeat protein OPG189 (561 aa).

ANK repeat units follow at residues 68–98 (YGEN…NINK), 172–208 (YGCT…DVDK), 212–242 (YGNT…NIDS), 246–275 (NGYT…NVNA), 279–307 (FGTT…ELEI), 342–371 (YNET…DFET), and 375–404 (SGCT…SLKI).

Belongs to the orthopoxvirus OPG189 protein family.

In terms of biological role, contributes to viral release without involving rearrangement of host actin. In Cynomys gunnisoni (Gunnison's prairie dog), this protein is Ankyrin repeat protein OPG189 (OPG189).